A 267-amino-acid chain; its full sequence is Cysteine protease avirulence protein AvrPphB (267 aa).

Gly-63 carries the N-myristoyl glycine; by host lipid modification. Residues Cys-98, His-212, and Asp-227 contribute to the active site.

This sequence belongs to the peptidase C58 family. In infected plant cells, the 28 kDa product interacts with PBS1. Autocleaved. This function is essential for myristoylation in infected plant cell and for eliciting the plant hypersensitive response. Post-translationally, myristoylation of 28 kDa product in infected plant cells; it mediates the localization to membranes.

It localises to the secreted. Its subcellular location is the host membrane. Its function is as follows. Cysteine protease avirulence protein, which is essential during infection of plant cells from cultivar-specific of beans and Arabidopsis thaliana. The autocleavage of the protein is required for virulence function. May act by affecting the plant defense system. In plants lacking R3 or RPS5 resistance genes, it probably impairs the plant defense system and leads to the bacteria multiplication. In contrast, in plants containing the R3 or RPS5 protein, it is unable to induce disease symptoms, explaining its avirulence name. The 7 kDa product is required for the type-III translocation from Pseudomonas strains to the plant, but are partially dispensable for effector recognition following in planta expression. In infected plants, it acts by cleaving the PBS1 protein, which leads to resistance or disease, depending on the presence or absence of RPS5, respectively. Targets the Arabidopsis kinases PBS1, BIK1, PBL1, PBL2, PBL3, PBL5, PBL7, PBL9 and PBL11 for cleavage in vitro. Can block recognition of AvrB avirulence factor by plant cells by cleaving Arabidopsis RIPK kinase and suppressing Arabidopsis RPM1 activation. Cannot block AvrRpm1-induced activation of RPM1. In Pseudomonas savastanoi pv. phaseolicola (Pseudomonas syringae pv. phaseolicola), this protein is Cysteine protease avirulence protein AvrPphB (avrPph3).